We begin with the raw amino-acid sequence, 513 residues long: Maturase K (513 aa).

The protein belongs to the intron maturase 2 family. MatK subfamily.

The protein resides in the plastid. It localises to the chloroplast. In terms of biological role, usually encoded in the trnK tRNA gene intron. Probably assists in splicing its own and other chloroplast group II introns. This is Maturase K from Molinia caerulea (Purple moor-grass).